We begin with the raw amino-acid sequence, 422 residues long: Bifunctional enzyme IspD/IspF (422 aa).

Residues 1–267 (MAVGLLLLAA…PISALSMPLP (267 aa)) are 2-C-methyl-D-erythritol 4-phosphate cytidylyltransferase. The 2-C-methyl-D-erythritol 2,4-cyclodiphosphate synthase stretch occupies residues 268–422 (LIGVGIDFHK…AIAVAQIYHR (155 aa)). Asp274 and His276 together coordinate a divalent metal cation. 4-CDP-2-C-methyl-D-erythritol 2-phosphate-binding positions include 274-276 (DFH) and 301-302 (HS). His309 provides a ligand contact to a divalent metal cation. Residues 323 to 325 (DIG), Phe404, and Arg407 each bind 4-CDP-2-C-methyl-D-erythritol 2-phosphate.

The protein in the N-terminal section; belongs to the IspD/TarI cytidylyltransferase family. IspD subfamily. This sequence in the C-terminal section; belongs to the IspF family. It depends on a divalent metal cation as a cofactor.

It catalyses the reaction 2-C-methyl-D-erythritol 4-phosphate + CTP + H(+) = 4-CDP-2-C-methyl-D-erythritol + diphosphate. The enzyme catalyses 4-CDP-2-C-methyl-D-erythritol 2-phosphate = 2-C-methyl-D-erythritol 2,4-cyclic diphosphate + CMP. It functions in the pathway isoprenoid biosynthesis; isopentenyl diphosphate biosynthesis via DXP pathway; isopentenyl diphosphate from 1-deoxy-D-xylulose 5-phosphate: step 2/6. Its pathway is isoprenoid biosynthesis; isopentenyl diphosphate biosynthesis via DXP pathway; isopentenyl diphosphate from 1-deoxy-D-xylulose 5-phosphate: step 4/6. Bifunctional enzyme that catalyzes the formation of 4-diphosphocytidyl-2-C-methyl-D-erythritol from CTP and 2-C-methyl-D-erythritol 4-phosphate (MEP) (IspD), and catalyzes the conversion of 4-diphosphocytidyl-2-C-methyl-D-erythritol 2-phosphate (CDP-ME2P) to 2-C-methyl-D-erythritol 2,4-cyclodiphosphate (ME-CPP) with a corresponding release of cytidine 5-monophosphate (CMP) (IspF). The protein is Bifunctional enzyme IspD/IspF of Tropheryma whipplei (strain TW08/27) (Whipple's bacillus).